We begin with the raw amino-acid sequence, 401 residues long: Odorant receptor 88a (401 aa).

Topologically, residues Met-1–Gln-26 are cytoplasmic. The helical transmembrane segment at Met-27–Val-47 threads the bilayer. The Extracellular segment spans residues Pro-48–Ser-52. Residues Ala-53–Leu-73 form a helical membrane-spanning segment. The Cytoplasmic segment spans residues Gly-74–Arg-142. The chain crosses the membrane as a helical span at residues Ile-143–Thr-163. Over His-164–Asn-191 the chain is Extracellular. A helical transmembrane segment spans residues Phe-192–Val-212. At Thr-213 to Lys-277 the chain is on the cytoplasmic side. Residues Val-278–Leu-298 form a helical membrane-spanning segment. The Extracellular segment spans residues Ser-299 to Asp-303. The helical transmembrane segment at Val-304–Ile-324 threads the bilayer. The Cytoplasmic portion of the chain corresponds to Cys-325–Gln-370. The helical transmembrane segment at Leu-371–Ala-391 threads the bilayer. Over Tyr-392–His-401 the chain is Extracellular.

Belongs to the insect chemoreceptor superfamily. Heteromeric odorant receptor channel (TC 1.A.69) family. Or49a subfamily. Interacts with Orco. Complexes exist early in the endomembrane system in olfactory sensory neurons (OSNs), coupling these complexes to the conserved ciliary trafficking pathway. In terms of tissue distribution, expressed in olfactory sensory neurons in the antenna.

It is found in the cell membrane. Its function is as follows. Odorant receptor which mediates acceptance or avoidance behavior, depending on its substrates. The odorant receptor repertoire encodes a large collection of odor stimuli that vary widely in identity, intensity, and duration. May form a complex with Orco to form odorant-sensing units, providing sensitive and prolonged odorant signaling and calcium permeability. The protein is Odorant receptor 88a (Or88a) of Drosophila melanogaster (Fruit fly).